Consider the following 366-residue polypeptide: Sec-independent protein translocase protein TatC (366 aa).

The next 7 membrane-spanning stretches (helical) occupy residues 42–62 (VLAV…LFTM), 70–90 (HMPA…FIPL), 97–117 (AVFI…APGL), 134–154 (ILFY…VFGF), 179–199 (LFFA…LVIV), 207–227 (LAGF…ILTP), and 230–250 (VLSQ…GLFV). Acidic residues predominate over residues 266-279 (EAEESGAADDESDE). Positions 266–366 (EAEESGAADD…PSPKKPDSPV (101 aa)) are disordered. 2 stretches are compositionally biased toward basic and acidic residues: residues 281 to 290 (VSARHAEYEA) and 301 to 318 (DMDK…RLES). Polar residues predominate over residues 319-333 (DSSASDDGPESNTAG).

It belongs to the TatC family. In terms of assembly, the Tat system comprises two distinct complexes: a TatABC complex, containing multiple copies of TatA, TatB and TatC subunits, and a separate TatA complex, containing only TatA subunits. Substrates initially bind to the TatABC complex, which probably triggers association of the separate TatA complex to form the active translocon.

The protein localises to the cell inner membrane. Its function is as follows. Part of the twin-arginine translocation (Tat) system that transports large folded proteins containing a characteristic twin-arginine motif in their signal peptide across membranes. Together with TatB, TatC is part of a receptor directly interacting with Tat signal peptides. The polypeptide is Sec-independent protein translocase protein TatC (Halothiobacillus neapolitanus (strain ATCC 23641 / c2) (Thiobacillus neapolitanus)).